Consider the following 582-residue polypeptide: Inactive metallocarboxypeptidase ECM14 (582 aa).

A signal peptide spans 1–20 (MHILQVITGATLVSVPFVSA). The propeptide occupies 21-172 (IPSSTSEFLP…QAVYESYPQP (152 aa)). Residues 200 to 522 (DYQPLSVIIP…NAVLVFGQFL (323 aa)) form the Peptidase M14 domain. Zn(2+) contacts are provided by histidine 265 and glutamate 268. Residues 265–268 (HARE), arginine 323, and 340–341 (DR) contribute to the substrate site. Cysteine 334 and cysteine 357 form a disulfide bridge. 2 N-linked (GlcNAc...) asparagine glycosylation sites follow: asparagine 381 and asparagine 387. Zn(2+) is bound at residue histidine 397. 398-399 (SY) provides a ligand contact to substrate. The segment covering 561–571 (SNQLEDDDNEN) has biased composition (acidic residues). The tract at residues 561–582 (SNQLEDDDNENDTLLGFRTQKV) is disordered. N-linked (GlcNAc...) asparagine glycosylation occurs at asparagine 571.

The protein belongs to the peptidase M14 family. The cofactor is Zn(2+).

It localises to the vacuole. The protein localises to the secreted. Its function is as follows. Inactive carboxypeptidase that may play a role in cell wall organization and biogenesis. This Coccidioides posadasii (strain C735) (Valley fever fungus) protein is Inactive metallocarboxypeptidase ECM14 (ECM14).